We begin with the raw amino-acid sequence, 134 residues long: 6,7-dimethyl-8-ribityllumazine synthase (134 aa).

Residues Phe11, 43 to 45 (AYD), and 67 to 69 (AIV) contribute to the 5-amino-6-(D-ribitylamino)uracil site. 72–73 (DT) contacts (2S)-2-hydroxy-3-oxobutyl phosphate. The active-site Proton donor is His75. Phe100 is a binding site for 5-amino-6-(D-ribitylamino)uracil. Arg115 is a (2S)-2-hydroxy-3-oxobutyl phosphate binding site.

The protein belongs to the DMRL synthase family.

It carries out the reaction (2S)-2-hydroxy-3-oxobutyl phosphate + 5-amino-6-(D-ribitylamino)uracil = 6,7-dimethyl-8-(1-D-ribityl)lumazine + phosphate + 2 H2O + H(+). It participates in cofactor biosynthesis; riboflavin biosynthesis; riboflavin from 2-hydroxy-3-oxobutyl phosphate and 5-amino-6-(D-ribitylamino)uracil: step 1/2. Functionally, catalyzes the formation of 6,7-dimethyl-8-ribityllumazine by condensation of 5-amino-6-(D-ribitylamino)uracil with 3,4-dihydroxy-2-butanone 4-phosphate. This is the penultimate step in the biosynthesis of riboflavin. The protein is 6,7-dimethyl-8-ribityllumazine synthase of Halorubrum lacusprofundi (strain ATCC 49239 / DSM 5036 / JCM 8891 / ACAM 34).